Reading from the N-terminus, the 541-residue chain is Developmental and secondary metabolism regulator VEL1 (541 aa).

Residues 26 to 220 enclose the Velvet domain; it reads NRHLWYQLTV…ADQGCRVRIR (195 aa). Residues 40–45 carry the Nuclear localization signal motif; the sequence is ERARAC. Disordered regions lie at residues 222-447 and 464-483; these read DVRM…MPTQ and PIEA…TGGK. Over residues 230 to 244 the composition is skewed to basic and acidic residues; sequence GKGSGYDRREEEYAR. Low complexity predominate over residues 289-298; the sequence is APSLPHAPSL. 3 stretches are compositionally biased toward pro residues: residues 299 to 314, 345 to 355, and 425 to 439; these read PHAP…PPAA, APIPPVTPTGP, and SPAP…PAPS. A PEST region spans residues 444-472; the sequence is MPTQSSLAPLKIASLVSPLPPIEAQTEPL.

It belongs to the velvet family. VeA subfamily. In terms of assembly, component of the heterotrimeric velvet complex composed of LAE1, VEL1 and VEL2; VEL1 acting as a bridging protein between LAE1 and VEL2.

It is found in the nucleus. The protein localises to the cytoplasm. In terms of biological role, component of the velvet transcription factor complex that controls sexual/asexual developmental ratio in response to light, promoting sexual development in the darkness while stimulating asexual sporulation under illumination. The velvet complex acts as a global regulator for secondary metabolite gene expression. Controls the expression of the gliotoxin gene cluster. Plays a key role in mycoparasitism. In Hypocrea virens (strain Gv29-8 / FGSC 10586) (Gliocladium virens), this protein is Developmental and secondary metabolism regulator VEL1.